The primary structure comprises 455 residues: Phosphoglucosamine mutase (455 aa).

Ser-108 acts as the Phosphoserine intermediate in catalysis. The Mg(2+) site is built by Ser-108, Asp-246, Asp-248, and Asp-250. Ser-108 carries the phosphoserine modification.

It belongs to the phosphohexose mutase family. Mg(2+) serves as cofactor. Post-translationally, activated by phosphorylation.

It catalyses the reaction alpha-D-glucosamine 1-phosphate = D-glucosamine 6-phosphate. Functionally, catalyzes the conversion of glucosamine-6-phosphate to glucosamine-1-phosphate. This is Phosphoglucosamine mutase from Frankia alni (strain DSM 45986 / CECT 9034 / ACN14a).